The following is a 109-amino-acid chain: LSM2-LSM8 complex subunit LSM8 (109 aa).

A Sm domain is found at 1–70 (MSATLKDYLN…IALVGLIDAE (70 aa)).

The protein belongs to the snRNP Sm proteins family. As to quaternary structure, component of the heptameric LSM2-LSM8 complex that forms a seven-membered ring structure with a donut shape; an RNA strand can pass through the hole in the center of the ring structure. The LSm subunits are arranged in the order LSM8, LSM2, LSM3, LSM6, LSM5, LSM7 and LSM4. Component of the spliceosome U4/U6-U5 tri-snRNP complex composed of the U4, U6 and U5 snRNAs and at least PRP3, PRP4, PRP6, PRP8, PRP18, PRP31, PRP38, SNU13, SNU23, SNU66, SNU114, SPP381, SMB1, SMD1, SMD2, SMD3, SMX2, SMX3, LSM2, LSM3, LSM4, LSM5, LSM6, LSM7, LSM8, BRR2 and DIB1.

Its subcellular location is the nucleus. It is found in the cytoplasm. Component of the nuclear LSM2-LSM8 complex, which is involved in spliceosome assembly. The LSM2-LSM8 complex plays a role in the biogenesis of the spliceosomal U4/U6-U5 tri-snRNP complex by accelerating PRP24-mediated annealing of U4/U6 di-snRNA. The LSM2-LSM8 complex binds U6 snRNA terminating with a non-cyclic 3' phosphate group. LSM2-LSM8 is probably also involved in degradation of nuclear pre-mRNA by targeting them for decapping. LSM2-LSM8 could be involved in processing of pre-tRNAs, pre-rRNAs and U3 snoRNA, although involvement may be indirect. In Saccharomyces cerevisiae (strain ATCC 204508 / S288c) (Baker's yeast), this protein is LSM2-LSM8 complex subunit LSM8 (LSM8).